The chain runs to 214 residues: Protein get-1 (214 aa).

Residues 1–4 lie on the Lumenal side of the membrane; it reads MPSL. Residues 5-24 form a helical membrane-spanning segment; the sequence is LVVIFVIELFVQLVNTIGAA. The Cytoplasmic portion of the chain corresponds to 25–110; the sequence is TINNLLWRIA…KFDRTLTTVR (86 aa). Residues 73–107 are a coiled coil; it reads KWARLRRQHDKLLEDLEKRKKELDAAKTKFDRTLT. The helical transmembrane segment at 111-131 threads the bilayer; it reads VVATRGLQWFLPFWYSREPMF. Over 132–155 the chain is Lumenal; that stretch reads WLPYGWFPYYVEWFASFPRAPLGS. The helical transmembrane segment at 156–172 threads the bilayer; the sequence is VSIVVWQWACTGVIKLV. Residues 173-214 are Cytoplasmic-facing; the sequence is IETVMAVVGLIVAARQKQQEKQKAKQAVPAAGGGDSKAEEAK. Positions 190–214 are disordered; sequence QQEKQKAKQAVPAAGGGDSKAEEAK.

Belongs to the WRB/GET1 family. Interacts with GET3.

Its subcellular location is the endoplasmic reticulum membrane. In terms of biological role, required for the post-translational delivery of tail-anchored (TA) proteins to the endoplasmic reticulum. Acts as a membrane receptor for soluble GET3, which recognizes and selectively binds the transmembrane domain of TA proteins in the cytosol. This chain is Protein get-1 (get-1), found in Neurospora crassa (strain ATCC 24698 / 74-OR23-1A / CBS 708.71 / DSM 1257 / FGSC 987).